The sequence spans 669 residues: Protein BNIP5 (669 aa).

Disordered stretches follow at residues Met-1–Gln-116, Ile-131–Val-259, Gln-273–Glu-401, and Leu-413–Arg-544. A compositionally biased stretch (basic and acidic residues) spans Arg-34–Glu-47. A compositionally biased stretch (polar residues) spans Ser-48 to Pro-73. Composition is skewed to basic and acidic residues over residues Glu-104 to Arg-113 and Ile-131 to Leu-148. Over residues Arg-158–Lys-175 the composition is skewed to basic residues. Positions Glu-285–Leu-295 are enriched in pro residues. Lys-314 is covalently cross-linked (Glycyl lysine isopeptide (Lys-Gly) (interchain with G-Cter in SUMO2)). A compositionally biased stretch (polar residues) spans Val-346–Leu-357. Residues Pro-390 to Glu-401 are compositionally biased toward basic and acidic residues. Residues Ser-445 to Ser-462 show a composition bias toward basic residues. Residues Ala-516 to Pro-528 are compositionally biased toward low complexity.

The protein is Protein BNIP5 (Bnip5) of Mus musculus (Mouse).